A 585-amino-acid chain; its full sequence is Lipoprotein LpqB (585 aa).

The N-terminal stretch at 1–18 (MKRLLTVLVVGLVALVSG) is a signal peptide. The N-palmitoyl cysteine moiety is linked to residue C19. The S-diacylglycerol cysteine moiety is linked to residue C19. A disordered region spans residues 24 to 46 (SSSSPQAIGTVERPAPPSLPKPT). The span at 37–46 (PAPPSLPKPT) shows a compositional bias: pro residues.

This sequence belongs to the LpqB lipoprotein family. Interacts with MtrB, probably extracytoplasmically via its sensor domain.

It is found in the cell membrane. Its subcellular location is the secreted. The protein localises to the cell wall. Its function is as follows. May modulate activity of the MtrAB system in controlling homeostasis of the cell wall and cell division. This chain is Lipoprotein LpqB, found in Mycolicibacterium smegmatis (strain ATCC 700084 / mc(2)155) (Mycobacterium smegmatis).